A 100-amino-acid chain; its full sequence is MSDISRDEVAHLAKLSRLALSEEELKQFAAQIDEIVDSVSAVGKVEAEGVEPMSHPHSVHAPMREDVVVRTLTAEQALDQAPAADDDRFMVPQILGGGDE.

The protein belongs to the GatC family. Heterotrimer of A, B and C subunits.

The enzyme catalyses L-glutamyl-tRNA(Gln) + L-glutamine + ATP + H2O = L-glutaminyl-tRNA(Gln) + L-glutamate + ADP + phosphate + H(+). It catalyses the reaction L-aspartyl-tRNA(Asn) + L-glutamine + ATP + H2O = L-asparaginyl-tRNA(Asn) + L-glutamate + ADP + phosphate + 2 H(+). Allows the formation of correctly charged Asn-tRNA(Asn) or Gln-tRNA(Gln) through the transamidation of misacylated Asp-tRNA(Asn) or Glu-tRNA(Gln) in organisms which lack either or both of asparaginyl-tRNA or glutaminyl-tRNA synthetases. The reaction takes place in the presence of glutamine and ATP through an activated phospho-Asp-tRNA(Asn) or phospho-Glu-tRNA(Gln). In Corynebacterium aurimucosum (strain ATCC 700975 / DSM 44827 / CIP 107346 / CN-1) (Corynebacterium nigricans), this protein is Aspartyl/glutamyl-tRNA(Asn/Gln) amidotransferase subunit C.